Here is a 208-residue protein sequence, read N- to C-terminus: Probable acyl-homoserine-lactone synthase (208 aa).

This sequence belongs to the autoinducer synthase family.

The enzyme catalyses a fatty acyl-[ACP] + S-adenosyl-L-methionine = an N-acyl-L-homoserine lactone + S-methyl-5'-thioadenosine + holo-[ACP] + H(+). In terms of biological role, required for the synthesis of OHHL (N-(3-oxooctanoyl)-L-homoserine lactone), an autoinducer molecule which binds to TraR and thus acts in the control of conjugal transfer. In Sinorhizobium fredii (strain NBRC 101917 / NGR234), this protein is Probable acyl-homoserine-lactone synthase (traI).